We begin with the raw amino-acid sequence, 254 residues long: Acetylglutamate kinase (254 aa).

Substrate contacts are provided by residues 40–41 (GG), Arg-62, and Asn-154.

This sequence belongs to the acetylglutamate kinase family. ArgB subfamily.

Its subcellular location is the cytoplasm. The catalysed reaction is N-acetyl-L-glutamate + ATP = N-acetyl-L-glutamyl 5-phosphate + ADP. It participates in amino-acid biosynthesis; L-arginine biosynthesis; N(2)-acetyl-L-ornithine from L-glutamate: step 2/4. In terms of biological role, catalyzes the ATP-dependent phosphorylation of N-acetyl-L-glutamate. This chain is Acetylglutamate kinase, found in Staphylococcus aureus (strain Mu3 / ATCC 700698).